The chain runs to 189 residues: Early E3 20.5 kDa glycoprotein (189 aa).

Residues asparagine 73 and asparagine 137 are each glycosylated (N-linked (GlcNAc...) asparagine; by host).

It belongs to the adenoviridae E3_20 family.

In terms of biological role, E3 proteins seem to be dispensable for virus growth in tissue culture cells. They are potentially important for virus growth under special conditions; E3 region may help adenoviruses to evade the immune surveillance of the host. This Human adenovirus B serotype 3 (HAdV-3) protein is Early E3 20.5 kDa glycoprotein.